Reading from the N-terminus, the 161-residue chain is Cyclic pyranopterin monophosphate synthase (161 aa).

Substrate-binding positions include 78–80 and 116–117; these read LCH and ME. Aspartate 131 is an active-site residue.

Belongs to the MoaC family. Homohexamer; trimer of dimers.

The catalysed reaction is (8S)-3',8-cyclo-7,8-dihydroguanosine 5'-triphosphate = cyclic pyranopterin phosphate + diphosphate. It functions in the pathway cofactor biosynthesis; molybdopterin biosynthesis. Catalyzes the conversion of (8S)-3',8-cyclo-7,8-dihydroguanosine 5'-triphosphate to cyclic pyranopterin monophosphate (cPMP). The polypeptide is Cyclic pyranopterin monophosphate synthase (Bordetella parapertussis (strain 12822 / ATCC BAA-587 / NCTC 13253)).